The chain runs to 623 residues: Putative pentatricopeptide repeat-containing protein At3g11460, mitochondrial (623 aa).

The N-terminal 35 residues, 1-35 (MIVVTSFVRNSAVAAVASTPWNVRLRELAYQSLFS), are a transit peptide targeting the mitochondrion. PPR repeat units lie at residues 17-51 (ASTPWNVRLRELAYQSLFSESISLYRSMLRSGSSP), 52-86 (DAFSFPFILKSCASLSLPVSGQQLHCHVTKGGCET), 87-117 (EPFVLTALISMYCKCGLVADARKVFEENPQS), 120-154 (LSVCYNALISGYTANSKVTDAAYMFRRMKETGVSV), 155-189 (DSVTMLGLVPLCTVPEYLWLGRSLHGQCVKGGLDS), 190-220 (EVAVLNSFITMYMKCGSVEAGRRLFDEMPVK), 221-255 (GLITWNAVISGYSQNGLAYDVLELYEQMKSSGVCP), 256-290 (DPFTLVSVLSSCAHLGAKKIGHEVGKLVESNGFVP), 291-321 (NVFVSNASISMYARCGNLAKARAVFDIMPVK), 322-356 (SLVSWTAMIGCYGMHGMGEIGLMLFDDMIKRGIRP), 357-387 (DGAVFVMVLSACSHSGLTDKGLELFRAMKRE), and 393-423 (GPEHYSCLVDLLGRAGRLDEAMEFIESMPVE). The type E motif stretch occupies residues 428-503 (VWGALLGACK…KPGYSYVEHK (76 aa)). The interval 504 to 535 (GRVHLFLAGDRSHEQTEEVHRMLDELETSVME) is type E(+) motif. The tract at residues 536-623 (LAGNMDCDRG…DGVCSCKDYW (88 aa)) is type DYW motif.

It belongs to the PPR family. PCMP-H subfamily. In terms of assembly, interacts with MORF8/RIP1.

It localises to the mitochondrion. Functionally, involved in C-to-U editing of mitochondrial RNA. Required specifically for editing the mitochondrial NAD2 transcript. The sequence is that of Putative pentatricopeptide repeat-containing protein At3g11460, mitochondrial (PCMP-H52) from Arabidopsis thaliana (Mouse-ear cress).